The chain runs to 238 residues: Large ribosomal subunit protein uL1 (238 aa).

Belongs to the universal ribosomal protein uL1 family. Part of the 50S ribosomal subunit.

In terms of biological role, binds directly to 23S rRNA. The L1 stalk is quite mobile in the ribosome, and is involved in E site tRNA release. Protein L1 is also a translational repressor protein, it controls the translation of the L11 operon by binding to its mRNA. The polypeptide is Large ribosomal subunit protein uL1 (Rickettsia prowazekii (strain Madrid E)).